A 122-amino-acid polypeptide reads, in one-letter code: ATP synthase epsilon chain (122 aa).

Over residues 97-112 the composition is skewed to basic and acidic residues; the sequence is EDLKSERELTRSRGDA. The segment at 97 to 122 is disordered; sequence EDLKSERELTRSRGDAALRATRRLNS.

The protein belongs to the ATPase epsilon chain family. As to quaternary structure, F-type ATPases have 2 components, CF(1) - the catalytic core - and CF(0) - the membrane proton channel. CF(1) has five subunits: alpha(3), beta(3), gamma(1), delta(1), epsilon(1). CF(0) has three main subunits: a, b and c.

It localises to the cell membrane. In terms of biological role, produces ATP from ADP in the presence of a proton gradient across the membrane. This Corynebacterium aurimucosum (strain ATCC 700975 / DSM 44827 / CIP 107346 / CN-1) (Corynebacterium nigricans) protein is ATP synthase epsilon chain.